We begin with the raw amino-acid sequence, 102 residues long: MALVEFLMETLDGLKGTDIVHFDVRGKSSITDNMIICTGTSSRQVSAMADNLITECKKAGFETFGEEGKNTADWIVVDLGQAIVHIMQRDAREMYQLEKLWA.

It belongs to the Iojap/RsfS family. In terms of assembly, interacts with ribosomal protein uL14 (rplN).

It is found in the cytoplasm. In terms of biological role, functions as a ribosomal silencing factor. Interacts with ribosomal protein uL14 (rplN), blocking formation of intersubunit bridge B8. Prevents association of the 30S and 50S ribosomal subunits and the formation of functional ribosomes, thus repressing translation. This is Ribosomal silencing factor RsfS from Haemophilus influenzae (strain ATCC 51907 / DSM 11121 / KW20 / Rd).